The sequence spans 252 residues: ATP synthase subunit a (252 aa).

Transmembrane regions (helical) follow at residues 33-53 (GQVF…ALAA), 92-112 (VPFV…GALV), 130-150 (DINT…YAGL), 196-216 (LVVG…VMAL), and 217-237 (GLFT…TYIG).

The protein belongs to the ATPase A chain family. As to quaternary structure, F-type ATPases have 2 components, CF(1) - the catalytic core - and CF(0) - the membrane proton channel. CF(1) has five subunits: alpha(3), beta(3), gamma(1), delta(1), epsilon(1). CF(0) has three main subunits: a(1), b(2) and c(9-12). The alpha and beta chains form an alternating ring which encloses part of the gamma chain. CF(1) is attached to CF(0) by a central stalk formed by the gamma and epsilon chains, while a peripheral stalk is formed by the delta and b chains.

It localises to the cellular thylakoid membrane. Key component of the proton channel; it plays a direct role in the translocation of protons across the membrane. The chain is ATP synthase subunit a from Synechococcus sp. (strain PCC 6716).